We begin with the raw amino-acid sequence, 367 residues long: Alanine racemase (367 aa).

The active-site Proton acceptor; specific for D-alanine is the Lys35. Position 35 is an N6-(pyridoxal phosphate)lysine (Lys35). Arg130 serves as a coordination point for substrate. Tyr259 acts as the Proton acceptor; specific for L-alanine in catalysis. Met307 contributes to the substrate binding site.

It belongs to the alanine racemase family. The cofactor is pyridoxal 5'-phosphate.

The catalysed reaction is L-alanine = D-alanine. It participates in amino-acid biosynthesis; D-alanine biosynthesis; D-alanine from L-alanine: step 1/1. Its function is as follows. Catalyzes the interconversion of L-alanine and D-alanine. May also act on other amino acids. In Delftia acidovorans (strain DSM 14801 / SPH-1), this protein is Alanine racemase (alr).